Here is a 628-residue protein sequence, read N- to C-terminus: Growth hormone receptor (628 aa).

Positions 1–18 (MDLWQLLLTLAVVGSSNA) are cleaved as a signal peptide. The Extracellular segment spans residues 19-266 (FVGREAVTVT…FTCEEEFQFP (248 aa)). N-linked (GlcNAc...) asparagine glycans are attached at residues N33, N40, and N46. 2 cysteine pairs are disulfide-bonded: C56–C66 and C101–C112. N-linked (GlcNAc...) asparagine glycosylation is present at N115. A disulfide bridge connects residues C126 and C140. The region spanning 151-254 (PPTGLNWTLM…EILYITLPQS (104 aa)) is the Fibronectin type-III domain. N-linked (GlcNAc...) asparagine glycosylation is found at N156, N161, and N200. The short motif at 240–244 (YGEFS) is the WSXWS motif element. A helical transmembrane segment spans residues 267 to 287 (WFLIMIFGIFGLTVMLLVVMF). Topologically, residues 288–628 (SKQQRIKMLI…STDQLNKIML (341 aa)) are cytoplasmic. The tract at residues 294 to 379 (KMLILPPVPV…HQKSLNILGA (86 aa)) is required for JAK2 binding. Residues 297 to 305 (ILPPVPVPK) carry the Box 1 motif motif. Residues 340-349 (DSWVEFIELD) carry the UbE motif motif. Phosphoserine is present on S341. Residues Y483 and Y585 each carry the phosphotyrosine modification.

It belongs to the type I cytokine receptor family. Type 1 subfamily. On growth hormone (GH) binding, forms homodimers and binds JAK2 via a box 1-containing domain. In terms of processing, the soluble form (GHBP) is produced by phorbol ester-promoted proteolytic cleavage at the cell surface (shedding) by ADAM17/TACE. Shedding is inhibited by growth hormone (GH) binding to the receptor probably due to a conformational change in GHR rendering the receptor inaccessible to ADAM17. Post-translationally, on GH binding, phosphorylated on tyrosine residues in the cytoplasmic domain by JAK2. Ubiquitinated by the ECS(SOCS2) complex following ligand-binding and phosphorylation by JAK2, leading to its degradation by the proteasome. Regulation by the ECS(SOCS2) complex acts as a negative feedback loop of growth hormone receptor signaling. Ubiquitination is not sufficient for GHR internalization.

It is found in the cell membrane. The protein resides in the secreted. Receptor for pituitary gland growth hormone (GH1) involved in regulating postnatal body growth. On ligand binding, couples to the JAK2/STAT5 pathway. Its function is as follows. The soluble form (GHBP) acts as a reservoir of growth hormone in plasma and may be a modulator/inhibitor of GH signaling. The sequence is that of Growth hormone receptor (GHR) from Cavia porcellus (Guinea pig).